We begin with the raw amino-acid sequence, 1758 residues long: RanBP2-like and GRIP domain-containing protein 3 (1758 aa).

Serine 21 bears the Phosphoserine mark. A TPR 1 repeat occupies 60–93 (PRAHRFLGLLYELEENTEKAVECYRRSVELNPTQ). Residues 176–229 (RSTKRLKDAVARCHEAERNIALRSSLEWNSCVVQTLKEYLESLQCLESDKSDWR) adopt a coiled-coil conformation. The stretch at 584-617 (QKMGSGLNSFYDQREYIGRSVHYWKKVLPLLKII) is one TPR 2 repeat. The interval 761-805 (GPLYKNGSLRNADSEIKHSTPSPTKYSLSPSKSYKYSPKTPPRWA) is disordered. Positions 779 to 798 (STPSPTKYSLSPSKSYKYSP) are enriched in low complexity. A coiled-coil region spans residues 805–837 (AEDQNSLLKMIRQEVKAIKEEMQELKLNSSKSA). Residues 1037-1173 (HFEPVVQMPE…FEECQRLLLD (137 aa)) enclose the RanBD1 1 domain. 3 disordered regions span residues 1216-1248 (VAEEENKGSGTGAAGASDTTIKPNAENTGPTLE), 1307-1335 (AKLNQSGTSVGTDEESDVTQEEERDGQYF), and 1581-1622 (NNSE…KNLS). The span at 1236 to 1245 (IKPNAENTGP) shows a compositional bias: polar residues. A compositionally biased stretch (acidic residues) spans 1318 to 1330 (TDEESDVTQEEER). A RanBD1 2 domain is found at 1334–1470 (YFEPVVPLPD…FDEAKTAQEK (137 aa)). Polar residues predominate over residues 1581–1594 (NNSETSSVAQSGSE). Basic and acidic residues predominate over residues 1595–1618 (SKVEPKKCELSKNSDIEQSSDSKV). The 51-residue stretch at 1703-1753 (QEVSAANVEHLKNVLLQFIFLKPGSERERLLPVINTMLQLSLEEKGKLAAV) folds into the GRIP domain.

In Homo sapiens (Human), this protein is RanBP2-like and GRIP domain-containing protein 3 (RGPD3).